Reading from the N-terminus, the 467-residue chain is 3-isopropylmalate dehydratase large subunit (467 aa).

[4Fe-4S] cluster is bound by residues cysteine 347, cysteine 407, and cysteine 410.

This sequence belongs to the aconitase/IPM isomerase family. LeuC type 1 subfamily. Heterodimer of LeuC and LeuD. [4Fe-4S] cluster is required as a cofactor.

The catalysed reaction is (2R,3S)-3-isopropylmalate = (2S)-2-isopropylmalate. It functions in the pathway amino-acid biosynthesis; L-leucine biosynthesis; L-leucine from 3-methyl-2-oxobutanoate: step 2/4. In terms of biological role, catalyzes the isomerization between 2-isopropylmalate and 3-isopropylmalate, via the formation of 2-isopropylmaleate. This is 3-isopropylmalate dehydratase large subunit from Nostoc sp. (strain PCC 7120 / SAG 25.82 / UTEX 2576).